Consider the following 482-residue polypeptide: Adenylyltransferase and sulfurtransferase uba4 (482 aa).

Residues Gly-93, Asp-114, 121–125 (SNLHR), Lys-138, and 182–183 (DN) each bind ATP. Zn(2+) contacts are provided by Cys-231 and Cys-234. The active-site Glycyl thioester intermediate; for adenylyltransferase activity is Cys-248. Residues Cys-309 and Cys-312 each coordinate Zn(2+). The Rhodanese domain maps to 362–480 (EEKEPTIIDV…WKEQVDPEWP (119 aa)). Cys-435 (cysteine persulfide intermediate; for sulfurtransferase activity) is an active-site residue.

The protein in the N-terminal section; belongs to the HesA/MoeB/ThiF family. UBA4 subfamily. It depends on Zn(2+) as a cofactor.

The protein localises to the cytoplasm. The protein resides in the cytosol. The enzyme catalyses [molybdopterin-synthase sulfur-carrier protein]-C-terminal Gly-Gly + ATP + H(+) = [molybdopterin-synthase sulfur-carrier protein]-C-terminal Gly-Gly-AMP + diphosphate. It catalyses the reaction [molybdopterin-synthase sulfur-carrier protein]-C-terminal Gly-Gly-AMP + S-sulfanyl-L-cysteinyl-[cysteine desulfurase] + AH2 = [molybdopterin-synthase sulfur-carrier protein]-C-terminal-Gly-aminoethanethioate + L-cysteinyl-[cysteine desulfurase] + A + AMP + 2 H(+). Its pathway is tRNA modification; 5-methoxycarbonylmethyl-2-thiouridine-tRNA biosynthesis. It functions in the pathway cofactor biosynthesis; molybdopterin biosynthesis. Functionally, plays a central role in 2-thiolation of mcm(5)S(2)U at tRNA wobble positions of cytosolic tRNA(Lys), tRNA(Glu) and tRNA(Gln). Also essential during biosynthesis of the molybdenum cofactor. Acts by mediating the C-terminal thiocarboxylation of sulfur carriers urm1 and mocs2a. Its N-terminus first activates urm1 and mocs2a as acyl-adenylates (-COAMP), then the persulfide sulfur on the catalytic cysteine is transferred to urm1 and mocs2a to form thiocarboxylation (-COSH) of their C-terminus. The reaction probably involves hydrogen sulfide that is generated from the persulfide intermediate and that acts as a nucleophile towards urm1 and mocs2a. Subsequently, a transient disulfide bond is formed. Does not use thiosulfate as sulfur donor; nfs1 probably acting as a sulfur donor for thiocarboxylation reactions. The protein is Adenylyltransferase and sulfurtransferase uba4 of Aspergillus niger (strain ATCC MYA-4892 / CBS 513.88 / FGSC A1513).